The primary structure comprises 243 residues: Small ribosomal subunit protein uS3 (243 aa).

Residues 39–110 (IRTFIQKKYS…QVRINVVEVE (72 aa)) enclose the KH type-2 domain. The interval 221–243 (GAIPRRKGSRKPQQFEDRSNENS) is disordered. A compositionally biased stretch (basic and acidic residues) spans 233–243 (QQFEDRSNENS).

It belongs to the universal ribosomal protein uS3 family. Part of the 30S ribosomal subunit. Forms a tight complex with proteins S10 and S14.

Functionally, binds the lower part of the 30S subunit head. Binds mRNA in the 70S ribosome, positioning it for translation. The chain is Small ribosomal subunit protein uS3 from Prochlorococcus marinus subsp. pastoris (strain CCMP1986 / NIES-2087 / MED4).